We begin with the raw amino-acid sequence, 303 residues long: GTP cyclohydrolase FolE2 (303 aa).

It belongs to the GTP cyclohydrolase IV family.

The enzyme catalyses GTP + H2O = 7,8-dihydroneopterin 3'-triphosphate + formate + H(+). It functions in the pathway cofactor biosynthesis; 7,8-dihydroneopterin triphosphate biosynthesis; 7,8-dihydroneopterin triphosphate from GTP: step 1/1. Functionally, converts GTP to 7,8-dihydroneopterin triphosphate. This is GTP cyclohydrolase FolE2 from Exiguobacterium sp. (strain ATCC BAA-1283 / AT1b).